We begin with the raw amino-acid sequence, 68 residues long: Large ribosomal subunit protein uL30 (68 aa).

This sequence belongs to the universal ribosomal protein uL30 family. Part of the 50S ribosomal subunit.

The chain is Large ribosomal subunit protein uL30 from Paenarthrobacter aurescens (strain TC1).